The chain runs to 365 residues: Class I histocompatibility antigen, Gogo-C*0101/C*0102 alpha chain (365 aa).

The N-terminal stretch at 1-24 (MRVMAPRTLILLLSGALALTETWA) is a signal peptide. An alpha-1 region spans residues 25–114 (GSHSMRYFFT…LRGYYNQSED (90 aa)). Topologically, residues 25 to 308 (GSHSMRYFFT…EPSSQPTIPI (284 aa)) are extracellular. The N-linked (GlcNAc...) asparagine glycan is linked to asparagine 110. The tract at residues 115-206 (GSHTFQRMYG…ENGKETLQRA (92 aa)) is alpha-2. Intrachain disulfides connect cysteine 125-cysteine 188 and cysteine 227-cysteine 283. Residues 207-298 (DPPKTHVTHH…GLLEPLTLRW (92 aa)) are alpha-3. Residues 209–297 (PKTHVTHHPI…KGLLEPLTLR (89 aa)) enclose the Ig-like C1-type domain. The connecting peptide stretch occupies residues 299–308 (EPSSQPTIPI). Residues 309–332 (VGIVAGLAVLAVVFTGTVVAAVMC) form a helical membrane-spanning segment. Topologically, residues 333–365 (RRKSSGGKGGSCSQAACSNSAQGSDESLIACKA) are cytoplasmic. Serine 356 and serine 359 each carry phosphoserine.

It belongs to the MHC class I family. Heterodimer of an alpha chain and a beta chain (beta-2-microglobulin).

The protein localises to the membrane. Involved in the presentation of foreign antigens to the immune system. The polypeptide is Class I histocompatibility antigen, Gogo-C*0101/C*0102 alpha chain (Gorilla gorilla gorilla (Western lowland gorilla)).